We begin with the raw amino-acid sequence, 414 residues long: Phosphoglycerate kinase (414 aa).

Substrate is bound by residues 20–22 (DIN), arginine 37, 60–63 (HQSR), arginine 117, and arginine 164. ATP contacts are provided by residues glutamate 338 and 364-367 (GGHL).

The protein belongs to the phosphoglycerate kinase family. Monomer.

Its subcellular location is the cytoplasm. It catalyses the reaction (2R)-3-phosphoglycerate + ATP = (2R)-3-phospho-glyceroyl phosphate + ADP. The protein operates within carbohydrate degradation; glycolysis; pyruvate from D-glyceraldehyde 3-phosphate: step 2/5. The chain is Phosphoglycerate kinase from Methanococcus maripaludis (strain DSM 14266 / JCM 13030 / NBRC 101832 / S2 / LL).